The chain runs to 635 residues: Sulfite reductase [ferredoxin], chloroplastic (635 aa).

A chloroplast-targeting transit peptide spans 1–50; it reads MSGAIGGAEVHGFRGAAAQLPRSRVLGRPIRVAPPAAARPGGASAGSIRA. 2 disordered regions span residues 31–50 and 245–267; these read RVAP…SIRA and PEVT…PEPI. The span at 245 to 254 shows a compositional bias: basic and acidic residues; it reads PEVTKARNDN. Positions 494, 500, 540, and 544 each coordinate [4Fe-4S] cluster. Cysteine 544 is a binding site for siroheme.

This sequence belongs to the nitrite and sulfite reductase 4Fe-4S domain family. Monomer. Interacts with ferredoxin. Siroheme serves as cofactor. Requires [4Fe-4S] cluster as cofactor. Phosphorylated; this phosphorylation reduces DNA-binding. Present in roots and leaves (at protein level). In leaves, sulfite reductase activity is detected in both bundle sheath and mesophyll cell types.

It is found in the plastid. The protein resides in the chloroplast stroma. The protein localises to the chloroplast nucleoid. It localises to the plastid stroma. The catalysed reaction is hydrogen sulfide + 6 oxidized [2Fe-2S]-[ferredoxin] + 3 H2O = sulfite + 6 reduced [2Fe-2S]-[ferredoxin] + 7 H(+). Its activity is regulated as follows. Inhibited by the tryptophan-modifying reagent, N-bromosuccinimide (NBS), by the lysine-modifying reagent, N-acetylsuccinimide and by the arginine-modifying reagent, phenylglyoxal. Complex formation with ferredoxin prevents these inhibitions. Functionally, essential protein with sulfite reductase activity required in assimilatory sulfate reduction pathway during both primary and secondary metabolism and thus involved in development and growth. In terms of biological role, DNA-binding protein that binds to both double-stranded and single-stranded DNA without significant sequence specificity to reversibly repress the transcriptional activity of chloroplast nucleoids by promoting DNA compaction and possibly regulate DNA replication. The polypeptide is Sulfite reductase [ferredoxin], chloroplastic (SIR) (Zea mays (Maize)).